Reading from the N-terminus, the 661-residue chain is Galactan 5-O-arabinofuranosyltransferase (661 aa).

13 consecutive transmembrane segments (helical) span residues 26–46, 64–84, 108–128, 194–214, 217–237, 243–263, 265–285, 286–306, 312–332, 362–382, 393–413, 418–438, and 458–478; these read LVAIVGAAILAFAFALVLWMG, VASATIAAVLIVTGFLTWLWL, ALTYLASYLSPAALVVAVLAI, AFQPWAIVSMAVAASVLVPVW, ITGSLPVATGIALVTTCIILA, PYAAIVAMGIPAMLVLASRIA, GDKFALAGGIIYLGVSATFYT, LFTGAIALSAVAVCIVVAAIV, PLLWLAVLGGGSIVIALISWG, VPFLASSVVGLLCLVGLIYLV, MWVGIAVFYAWMGMSMAITLL, LGFRLDTVLVLIFATAGVLGI, and TATHLTNLIVVLVLLGGLYYA.

It belongs to the glycosyltransferase 85 family.

The protein resides in the cell membrane. The catalysed reaction is Adds an alpha-D-arabinofuranosyl group from trans,octacis-decaprenylphospho-beta-D-arabinofuranose at the 5-O-position of the eighth, tenth and twelfth galactofuranose unit of the galactofuranan chain of [beta-D-galactofuranosyl-(1-&gt;5)-beta-D-galactofuranosyl-(1-&gt;6)]14-beta-D-galactofuranosyl-(1-&gt;5)-beta-D-galactofuranosyl-(1-&gt;4)-alpha-L-rhamnopyranosyl-(1-&gt;3)-N-acetyl-alpha-D-glucosaminyl-diphospho-trans,octacis-decaprenol.. It participates in cell wall biogenesis; cell wall polysaccharide biosynthesis. Its function is as follows. Involved in the biosynthesis of the arabinogalactan (AG) region of the mycolylarabinogalactan-peptidoglycan (mAGP) complex, an essential component of the cell wall. Catalyzes the addition of the first key arabinofuranosyl (Araf) residue from the sugar donor decaprenyl-phospho-arabinose (DPA) on the C-5 of a 6-linked galactofuranosyl (Galf) of the galactan domain, thus 'priming' the galactan for further elaboration by other arabinofuranosyltransferases. This is Galactan 5-O-arabinofuranosyltransferase from Corynebacterium glutamicum (strain ATCC 13032 / DSM 20300 / JCM 1318 / BCRC 11384 / CCUG 27702 / LMG 3730 / NBRC 12168 / NCIMB 10025 / NRRL B-2784 / 534).